The primary structure comprises 150 residues: Putative esterase SSO1253 (150 aa).

This sequence belongs to the thioesterase PaaI family.

This is Putative esterase SSO1253 from Saccharolobus solfataricus (strain ATCC 35092 / DSM 1617 / JCM 11322 / P2) (Sulfolobus solfataricus).